Here is a 79-residue protein sequence, read N- to C-terminus: ATP synthase subunit c (79 aa).

Transmembrane regions (helical) follow at residues 11–31 (MAAA…IGIL) and 53–73 (FFIV…LGLY).

Belongs to the ATPase C chain family. As to quaternary structure, F-type ATPases have 2 components, F(1) - the catalytic core - and F(0) - the membrane proton channel. F(1) has five subunits: alpha(3), beta(3), gamma(1), delta(1), epsilon(1). F(0) has three main subunits: a(1), b(2) and c(10-14). The alpha and beta chains form an alternating ring which encloses part of the gamma chain. F(1) is attached to F(0) by a central stalk formed by the gamma and epsilon chains, while a peripheral stalk is formed by the delta and b chains.

Its subcellular location is the cell inner membrane. Its function is as follows. F(1)F(0) ATP synthase produces ATP from ADP in the presence of a proton or sodium gradient. F-type ATPases consist of two structural domains, F(1) containing the extramembraneous catalytic core and F(0) containing the membrane proton channel, linked together by a central stalk and a peripheral stalk. During catalysis, ATP synthesis in the catalytic domain of F(1) is coupled via a rotary mechanism of the central stalk subunits to proton translocation. In terms of biological role, key component of the F(0) channel; it plays a direct role in translocation across the membrane. A homomeric c-ring of between 10-14 subunits forms the central stalk rotor element with the F(1) delta and epsilon subunits. The chain is ATP synthase subunit c from Yersinia enterocolitica serotype O:8 / biotype 1B (strain NCTC 13174 / 8081).